The following is a 269-amino-acid chain: Diphthine synthase (269 aa).

Residues leucine 10, aspartate 87, valine 90, 115–116, leucine 166, alanine 209, and histidine 234 contribute to the S-adenosyl-L-methionine site; that span reads SI.

Belongs to the diphthine synthase family. As to quaternary structure, homodimer.

It carries out the reaction 2-[(3S)-amino-3-carboxypropyl]-L-histidyl-[translation elongation factor 2] + 3 S-adenosyl-L-methionine = diphthine-[translation elongation factor 2] + 3 S-adenosyl-L-homocysteine + 3 H(+). It participates in protein modification; peptidyl-diphthamide biosynthesis. Its function is as follows. S-adenosyl-L-methionine-dependent methyltransferase that catalyzes the trimethylation of the amino group of the modified target histidine residue in translation elongation factor 2 (EF-2), to form an intermediate called diphthine. The three successive methylation reactions represent the second step of diphthamide biosynthesis. This Pyrococcus furiosus (strain ATCC 43587 / DSM 3638 / JCM 8422 / Vc1) protein is Diphthine synthase.